The sequence spans 576 residues: Proline--tRNA ligase (576 aa).

Belongs to the class-II aminoacyl-tRNA synthetase family. ProS type 1 subfamily. Homodimer.

It localises to the cytoplasm. The catalysed reaction is tRNA(Pro) + L-proline + ATP = L-prolyl-tRNA(Pro) + AMP + diphosphate. Catalyzes the attachment of proline to tRNA(Pro) in a two-step reaction: proline is first activated by ATP to form Pro-AMP and then transferred to the acceptor end of tRNA(Pro). As ProRS can inadvertently accommodate and process non-cognate amino acids such as alanine and cysteine, to avoid such errors it has two additional distinct editing activities against alanine. One activity is designated as 'pretransfer' editing and involves the tRNA(Pro)-independent hydrolysis of activated Ala-AMP. The other activity is designated 'posttransfer' editing and involves deacylation of mischarged Ala-tRNA(Pro). The misacylated Cys-tRNA(Pro) is not edited by ProRS. In Helicobacter pylori (strain J99 / ATCC 700824) (Campylobacter pylori J99), this protein is Proline--tRNA ligase.